Here is a 260-residue protein sequence, read N- to C-terminus: Taurine import ATP-binding protein TauB (260 aa).

The 230-residue stretch at 6–235 (AQQVSVVYAS…RYAHGEPVRS (230 aa)) folds into the ABC transporter domain. 40-47 (GASGCGKS) provides a ligand contact to ATP.

This sequence belongs to the ABC transporter superfamily. Taurine importer (TC 3.A.1.17.1) family. In terms of assembly, the complex is composed of two ATP-binding proteins (TauB), two transmembrane proteins (TauC) and a solute-binding protein (TauA).

It localises to the cell inner membrane. The catalysed reaction is taurine(out) + ATP + H2O = taurine(in) + ADP + phosphate + H(+). Part of the ABC transporter complex TauABC involved in taurine import. Responsible for energy coupling to the transport system. This Burkholderia pseudomallei (strain K96243) protein is Taurine import ATP-binding protein TauB.